The primary structure comprises 299 residues: Transcription elongation factor A protein 2 (299 aa).

In terms of domain architecture, TFIIS N-terminal spans Glu5 to Ser82. Lys57 is covalently cross-linked (Glycyl lysine isopeptide (Lys-Gly) (interchain with G-Cter in ubiquitin)). 2 positions are modified to phosphoserine: Ser59 and Ser100. A disordered region spans residues Asp83–Thr126. Residues Leu95–Leu109 are compositionally biased toward polar residues. The TFIIS central domain maps to Val138–Thr254. The segment at Asp257–Lys297 adopts a TFIIS-type zinc-finger fold. Zn(2+) contacts are provided by Cys261, Cys264, Cys289, and Cys292.

Belongs to the TFS-II family. Interacts with the basal transcription factor GTF2B. Interacts with REXO1. As to expression, testis specific.

Its subcellular location is the nucleus. Functionally, necessary for efficient RNA polymerase II transcription elongation past template-encoded arresting sites. The arresting sites in DNA have the property of trapping a certain fraction of elongating RNA polymerases that pass through, resulting in locked ternary complexes. Cleavage of the nascent transcript by S-II allows the resumption of elongation from the new 3'-terminus. This is Transcription elongation factor A protein 2 (Tcea2) from Rattus norvegicus (Rat).